Reading from the N-terminus, the 180-residue chain is GTP cyclohydrolase 1 (180 aa).

3 residues coordinate Zn(2+): cysteine 71, histidine 74, and cysteine 142.

The protein belongs to the GTP cyclohydrolase I family. In terms of assembly, homomer.

It catalyses the reaction GTP + H2O = 7,8-dihydroneopterin 3'-triphosphate + formate + H(+). It functions in the pathway cofactor biosynthesis; 7,8-dihydroneopterin triphosphate biosynthesis; 7,8-dihydroneopterin triphosphate from GTP: step 1/1. This Helicobacter pylori (strain G27) protein is GTP cyclohydrolase 1.